A 192-amino-acid polypeptide reads, in one-letter code: 7-methyl-GTP pyrophosphatase (192 aa).

The active-site Proton acceptor is Asp-69.

It belongs to the Maf family. YceF subfamily. Requires a divalent metal cation as cofactor.

It localises to the cytoplasm. It catalyses the reaction N(7)-methyl-GTP + H2O = N(7)-methyl-GMP + diphosphate + H(+). In terms of biological role, nucleoside triphosphate pyrophosphatase that hydrolyzes 7-methyl-GTP (m(7)GTP). May have a dual role in cell division arrest and in preventing the incorporation of modified nucleotides into cellular nucleic acids. The sequence is that of 7-methyl-GTP pyrophosphatase from Methylobacillus flagellatus (strain ATCC 51484 / DSM 6875 / VKM B-1610 / KT).